The following is a 202-amino-acid chain: Dephospho-CoA kinase (202 aa).

Residues Ile3–Cys202 form the DPCK domain. Gly11–Leu16 is a binding site for ATP.

This sequence belongs to the CoaE family.

The protein resides in the cytoplasm. It catalyses the reaction 3'-dephospho-CoA + ATP = ADP + CoA + H(+). The protein operates within cofactor biosynthesis; coenzyme A biosynthesis; CoA from (R)-pantothenate: step 5/5. Catalyzes the phosphorylation of the 3'-hydroxyl group of dephosphocoenzyme A to form coenzyme A. The protein is Dephospho-CoA kinase of Ehrlichia chaffeensis (strain ATCC CRL-10679 / Arkansas).